Here is a 501-residue protein sequence, read N- to C-terminus: Cytoplasmic tRNA 2-thiolation protein 2 (501 aa).

The span at 1–12 (MCEMSEEYRESA) shows a compositional bias: basic and acidic residues. Disordered regions lie at residues 1–23 (MCEM…RLGT) and 192–214 (GVER…PTTA). Position 2 is an N-acetylcysteine (cysteine 2). Serine 492 is modified (phosphoserine).

The protein belongs to the CTU2/NCS2 family. As to quaternary structure, component of a complex at least composed of URM1, CTU2/NCS2 and CTU1/ATPBD3.

Its subcellular location is the cytoplasm. Its pathway is tRNA modification; 5-methoxycarbonylmethyl-2-thiouridine-tRNA biosynthesis. In terms of biological role, plays a central role in 2-thiolation of mcm(5)S(2)U at tRNA wobble positions of tRNA(Lys), tRNA(Glu) and tRNA(Gln). May act by forming a heterodimer with CTU1/ATPBD3 that ligates sulfur from thiocarboxylated URM1 onto the uridine of tRNAs at wobble position. The polypeptide is Cytoplasmic tRNA 2-thiolation protein 2 (Bos taurus (Bovine)).